The chain runs to 39 residues: Photosystem II reaction center protein L (39 aa).

A helical transmembrane segment spans residues 18 to 38 (ILYWGLLLIFVLAVLFSNYFF).

It belongs to the PsbL family. PSII is composed of 1 copy each of membrane proteins PsbA, PsbB, PsbC, PsbD, PsbE, PsbF, PsbH, PsbI, PsbJ, PsbK, PsbL, PsbM, PsbT, PsbX, PsbY, PsbZ, Psb30/Ycf12, at least 3 peripheral proteins of the oxygen-evolving complex and a large number of cofactors. It forms dimeric complexes.

Its subcellular location is the plastid membrane. Its function is as follows. One of the components of the core complex of photosystem II (PSII). PSII is a light-driven water:plastoquinone oxidoreductase that uses light energy to abstract electrons from H(2)O, generating O(2) and a proton gradient subsequently used for ATP formation. It consists of a core antenna complex that captures photons, and an electron transfer chain that converts photonic excitation into a charge separation. This subunit is found at the monomer-monomer interface and is required for correct PSII assembly and/or dimerization. The chain is Photosystem II reaction center protein L from Cuscuta pentagona (Five-angled dodder).